The sequence spans 59 residues: Large ribosomal subunit protein bL32 (59 aa).

The segment at 1-20 (MAVQQNKKSKSKKGMRRSHD) is disordered. A compositionally biased stretch (basic residues) spans 7-19 (KKSKSKKGMRRSH).

This sequence belongs to the bacterial ribosomal protein bL32 family.

This is Large ribosomal subunit protein bL32 from Nitratidesulfovibrio vulgaris (strain DSM 19637 / Miyazaki F) (Desulfovibrio vulgaris).